Here is a 600-residue protein sequence, read N- to C-terminus: Putative dehydrogenase XoxF (600 aa).

Positions 1–21 (MKNLMNGACLALLMSGTAALA) are cleaved as a signal peptide. Ca(2+)-binding residues include Glu192 and Asn276. The Proton acceptor role is filled by Asp318.

The protein belongs to the bacterial PQQ dehydrogenase family. It depends on pyrroloquinoline quinone as a cofactor. Ca(2+) serves as cofactor.

The polypeptide is Putative dehydrogenase XoxF (xoxF) (Paracoccus denitrificans).